The sequence spans 353 residues: Protein Wnt-11b-1 (353 aa).

Positions 1-22 (MAQIHHCVTLLLILCCSGLCGA) are cleaved as a signal peptide. Asn-31, Asn-38, and Asn-88 each carry an N-linked (GlcNAc...) asparagine glycan. Cystine bridges form between Cys-78–Cys-89, Cys-128–Cys-136, Cys-138–Cys-155, Cys-208–Cys-222, and Cys-210–Cys-217. Residue Ser-214 is the site of O-palmitoleoyl serine; by PORCN attachment. 2 positions are modified to sulfotyrosine: Tyr-274 and Tyr-281. 6 disulfide bridges follow: Cys-282–Cys-313, Cys-298–Cys-308, Cys-312–Cys-352, Cys-328–Cys-343, Cys-330–Cys-340, and Cys-335–Cys-336. Residue Asn-299 is glycosylated (N-linked (GlcNAc...) asparagine).

This sequence belongs to the Wnt family. In terms of assembly, homodimer. Secreted homodimers form a complex with wnt5a homodimers; tyrosine sulfation of both wnt11 and wnt5a by tpst1 is required for this interaction. Interacts with the transmembrane receptor fzd7/fz7. Interacts with lrp6 and ryk. Interacts with tdgf1/frl1. Interacts weakly with frzb1 and strongly with frzb2/crescent. Interaction with frzb2/crescent antagonizes wnt11 function in the neuroectoderm, but enhances it in mesodermal tissue. Post-translationally, glycosylation is required for protein secretion. Palmitoleoylation is required for efficient binding to frizzled receptors. Depalmitoleoylation leads to Wnt signaling pathway inhibition.

The protein localises to the secreted. It localises to the extracellular space. Its subcellular location is the extracellular matrix. Functionally, ligand for the frizzled7 transmembrane receptor. Primarily acts via non-canonical Wnt pathways mediated by either Ca(2+) and PKC, or by JNK and dvl2/dsh. Depending on the cellular context, can also signal via the canonical Wnt pathway mediated by beta-catenin and dvl2/dsh. May also inhibit canonical Wnt signaling. Maternally initiates dorsal/ventral axis formation by a canonical route, which signals via lrp6. In a complex with wnt5a, activates the canonical and non-canonical processes involved in axis formation. In the non-canonical pathway, acts through fzd7/fz7 to induce phosphorylation of dvl2/dsh. Signals through a non-canonical Wnt pathway to regulate convergent extension movements during gastrulation. Interactions with the secreted Wnt antagonist sfrp5 to coordinate foregut development, acting via a non-canonical wnt pathway whereby sfrp5 restricts wnt11b activity to prevent inappropriate foregut formation. Mediates cardiogenesis via non-canonical Wnt signaling involving JNK-activation and PKC. Acts redundantly with wnt11/wnt11r during pronephros induction. This chain is Protein Wnt-11b-1, found in Xenopus tropicalis (Western clawed frog).